A 186-amino-acid polypeptide reads, in one-letter code: High mobility group protein B4 (186 aa).

DNA-binding regions (HMG box) lie at residues 9–79 (PKAN…MNYV) and 93–161 (PRRP…ELYR). Residues 77–98 (NYVGKRKKRRKRDPQEPRRPPS) are disordered.

This sequence belongs to the HMGB family.

It localises to the nucleus. It is found in the chromosome. This Homo sapiens (Human) protein is High mobility group protein B4 (HMGB4).